The primary structure comprises 257 residues: UPF0246 protein YaaA (257 aa).

It belongs to the UPF0246 family.

The protein is UPF0246 protein YaaA of Salmonella choleraesuis (strain SC-B67).